The chain runs to 141 residues: S-adenosylmethionine decarboxylase proenzyme (141 aa).

S63 acts as the Schiff-base intermediate with substrate; via pyruvic acid in catalysis. At S63 the chain carries Pyruvic acid (Ser); by autocatalysis. The Proton acceptor; for processing activity role is filled by H68. C83 functions as the Proton donor; for catalytic activity in the catalytic mechanism.

The protein belongs to the prokaryotic AdoMetDC family. Type 1 subfamily. In terms of assembly, heterotetramer of two alpha and two beta chains arranged as a dimer of alpha/beta heterodimers. Pyruvate is required as a cofactor. In terms of processing, is synthesized initially as an inactive proenzyme. Formation of the active enzyme involves a self-maturation process in which the active site pyruvoyl group is generated from an internal serine residue via an autocatalytic post-translational modification. Two non-identical subunits are generated from the proenzyme in this reaction, and the pyruvate is formed at the N-terminus of the alpha chain, which is derived from the carboxyl end of the proenzyme. The post-translation cleavage follows an unusual pathway, termed non-hydrolytic serinolysis, in which the side chain hydroxyl group of the serine supplies its oxygen atom to form the C-terminus of the beta chain, while the remainder of the serine residue undergoes an oxidative deamination to produce ammonia and the pyruvoyl group blocking the N-terminus of the alpha chain.

The enzyme catalyses S-adenosyl-L-methionine + H(+) = S-adenosyl 3-(methylsulfanyl)propylamine + CO2. It functions in the pathway amine and polyamine biosynthesis; S-adenosylmethioninamine biosynthesis; S-adenosylmethioninamine from S-adenosyl-L-methionine: step 1/1. In terms of biological role, catalyzes the decarboxylation of S-adenosylmethionine to S-adenosylmethioninamine (dcAdoMet), the propylamine donor required for the synthesis of the polyamines spermine and spermidine from the diamine putrescine. This Thermococcus onnurineus (strain NA1) protein is S-adenosylmethionine decarboxylase proenzyme.